The sequence spans 294 residues: ATP synthase gamma chain (294 aa).

It belongs to the ATPase gamma chain family. As to quaternary structure, F-type ATPases have 2 components, CF(1) - the catalytic core - and CF(0) - the membrane proton channel. CF(1) has five subunits: alpha(3), beta(3), gamma(1), delta(1), epsilon(1). CF(0) has three main subunits: a, b and c.

The protein resides in the cell inner membrane. Produces ATP from ADP in the presence of a proton gradient across the membrane. The gamma chain is believed to be important in regulating ATPase activity and the flow of protons through the CF(0) complex. The polypeptide is ATP synthase gamma chain (Mesorhizobium japonicum (strain LMG 29417 / CECT 9101 / MAFF 303099) (Mesorhizobium loti (strain MAFF 303099))).